The following is a 352-amino-acid chain: Glycerol-1-phosphate dehydrogenase [NAD(P)+] (352 aa).

NAD(+)-binding positions include 99 to 103 and 121 to 124; these read GTKID and TSPS. A substrate-binding site is contributed by Asp126. Ser130 contributes to the NAD(+) binding site. Asp173 provides a ligand contact to substrate. Residues Asp173 and His253 each contribute to the Zn(2+) site. His257 contributes to the substrate binding site. Residue His269 coordinates Zn(2+).

Belongs to the glycerol-1-phosphate dehydrogenase family. Zn(2+) is required as a cofactor.

The protein resides in the cytoplasm. It catalyses the reaction sn-glycerol 1-phosphate + NAD(+) = dihydroxyacetone phosphate + NADH + H(+). The catalysed reaction is sn-glycerol 1-phosphate + NADP(+) = dihydroxyacetone phosphate + NADPH + H(+). The protein operates within membrane lipid metabolism; glycerophospholipid metabolism. Functionally, catalyzes the NAD(P)H-dependent reduction of dihydroxyacetonephosphate (DHAP or glycerone phosphate) to glycerol 1-phosphate (G1P). The G1P thus generated is used as the glycerophosphate backbone of phospholipids in the cellular membranes of Archaea. The chain is Glycerol-1-phosphate dehydrogenase [NAD(P)+] from Thermoplasma volcanium (strain ATCC 51530 / DSM 4299 / JCM 9571 / NBRC 15438 / GSS1).